The following is a 177-amino-acid chain: Tail tube protein (177 aa).

Belongs to the T4-like viruses Gp19 protein family.

The protein resides in the virion. Structural component of the bacteriophage tail which consists of a contractile sheath, a tube and a baseplate. The central cylindrical segment of the tail consists of a rigid tube, composed of multiple copies of the tail tube protein. During infection, contraction of the sheath drives the central tube through the host outer membrane, creating a channel for DNA ejection from the capsid into the host cell. This is Tail tube protein from Serratia marcescens (Serratia marcescens bacteriophage KSP90).